Here is a 176-residue protein sequence, read N- to C-terminus: Cell division control protein 31 (176 aa).

Basic residues predominate over residues 1-12 (MFANARAKRRSR). Positions 1-21 (MFANARAKRRSRASSPTPARL) are disordered. EF-hand domains are found at residues 34–69 (EQRQ…LGFN), 70–105 (AEKS…KIVE), 107–142 (DPLE…LNEN), and 143–176 (IDDQ…MDEA). Residues Asp47, Asp49, Asp51, and Glu58 each coordinate Ca(2+). 5 residues coordinate Ca(2+): Asp156, Asp158, Asp160, Glu162, and Glu167.

Belongs to the centrin family. Component of the spindle pole body (SPB), acting as the connector of microtubule arrays in the cytoplasm and the nucleoplasm, is involved in nuclear positioning before chromosome segregation, SPB separation, spindle formation, chromosome segregation, nuclear migration into the bud, nuclear reorientation after cytokinesis and nuclear fusion during conjugation. The SPB half-bridge, which is tightly associated with the cytoplasmic side of the nuclear envelope and the SPB, is playing a key role as the starting structure for and in the initiation of SPB duplication in G1. Within the complex, interacts with sad1.

Its subcellular location is the nucleus. Required for the proper coordination between exit from mitosis and the initiation of septation. Has a role in bipolar spindle formation during spindle pole body (SPB) duplication. Required for the localization of sad1 to the SPB. This is Cell division control protein 31 (cdc31) from Schizosaccharomyces pombe (strain 972 / ATCC 24843) (Fission yeast).